The following is a 299-amino-acid chain: Ribosomal RNA small subunit methyltransferase H (299 aa).

S-adenosyl-L-methionine contacts are provided by residues 36-38 (GGH), D55, D103, and Q110. Composition is skewed to basic and acidic residues over residues 268-282 (KPVR…ENPR) and 289-299 (RAAERIEKGGD). The disordered stretch occupies residues 268-299 (KPVRPSEEEIRENPRARSGRLRAAERIEKGGD).

The protein belongs to the methyltransferase superfamily. RsmH family.

The protein resides in the cytoplasm. The enzyme catalyses cytidine(1402) in 16S rRNA + S-adenosyl-L-methionine = N(4)-methylcytidine(1402) in 16S rRNA + S-adenosyl-L-homocysteine + H(+). In terms of biological role, specifically methylates the N4 position of cytidine in position 1402 (C1402) of 16S rRNA. This Thermotoga petrophila (strain ATCC BAA-488 / DSM 13995 / JCM 10881 / RKU-1) protein is Ribosomal RNA small subunit methyltransferase H.